Reading from the N-terminus, the 804-residue chain is Probable replication endonuclease from prophage-like region 2 (804 aa).

Active-site O-(5'-phospho-DNA)-tyrosine intermediate residues include Tyr503 and Tyr507.

It belongs to the phage GPA family.

Possible endonuclease which induces a single-strand cut and initiates DNA replication. The chain is Probable replication endonuclease from prophage-like region 2 from Salmonella typhi.